The chain runs to 298 residues: 4-hydroxybenzoate octaprenyltransferase (298 aa).

The next 7 helical transmembrane spans lie at 30 to 50, 54 to 74, 105 to 125, 148 to 168, 218 to 238, 240 to 260, and 275 to 295; these read IGTW…AEGI, GTLL…CVVN, VLFA…NLPT, FPQV…FMAI, DRLM…WVGL, LALG…FVFQ, and AFLN…LSLW.

Belongs to the UbiA prenyltransferase family. Mg(2+) is required as a cofactor.

The protein resides in the cell inner membrane. The catalysed reaction is all-trans-octaprenyl diphosphate + 4-hydroxybenzoate = 4-hydroxy-3-(all-trans-octaprenyl)benzoate + diphosphate. Its pathway is cofactor biosynthesis; ubiquinone biosynthesis. Catalyzes the prenylation of para-hydroxybenzoate (PHB) with an all-trans polyprenyl group. Mediates the second step in the final reaction sequence of ubiquinone-8 (UQ-8) biosynthesis, which is the condensation of the polyisoprenoid side chain with PHB, generating the first membrane-bound Q intermediate 3-octaprenyl-4-hydroxybenzoate. The sequence is that of 4-hydroxybenzoate octaprenyltransferase from Chromohalobacter salexigens (strain ATCC BAA-138 / DSM 3043 / CIP 106854 / NCIMB 13768 / 1H11).